The primary structure comprises 298 residues: ATP synthase gamma chain (298 aa).

This sequence belongs to the ATPase gamma chain family. F-type ATPases have 2 components, CF(1) - the catalytic core - and CF(0) - the membrane proton channel. CF(1) has five subunits: alpha(3), beta(3), gamma(1), delta(1), epsilon(1). CF(0) has three main subunits: a, b and c.

The protein resides in the cell inner membrane. Functionally, produces ATP from ADP in the presence of a proton gradient across the membrane. The gamma chain is believed to be important in regulating ATPase activity and the flow of protons through the CF(0) complex. The polypeptide is ATP synthase gamma chain (Francisella tularensis subsp. holarctica (strain FTNF002-00 / FTA)).